The primary structure comprises 250 residues: NADH-quinone oxidoreductase subunit C (250 aa).

2 disordered regions span residues 1-33 and 228-250; these read MSDD…PTGE and LGGV…RSYN.

This sequence belongs to the complex I 30 kDa subunit family. NDH-1 is composed of 14 different subunits. Subunits NuoB, C, D, E, F, and G constitute the peripheral sector of the complex.

The protein resides in the cell membrane. The catalysed reaction is a quinone + NADH + 5 H(+)(in) = a quinol + NAD(+) + 4 H(+)(out). Functionally, NDH-1 shuttles electrons from NADH, via FMN and iron-sulfur (Fe-S) centers, to quinones in the respiratory chain. The immediate electron acceptor for the enzyme in this species is believed to be a menaquinone. Couples the redox reaction to proton translocation (for every two electrons transferred, four hydrogen ions are translocated across the cytoplasmic membrane), and thus conserves the redox energy in a proton gradient. This chain is NADH-quinone oxidoreductase subunit C, found in Nocardioides sp. (strain ATCC BAA-499 / JS614).